The following is a 731-amino-acid chain: Elongation factor 2 (731 aa).

The 216-residue stretch at 19 to 234 (EYIRNIGICA…DIIDYCNEGK (216 aa)) folds into the tr-type G domain. GTP is bound by residues 28–35 (AHIDHGKT), 94–98 (DTPGH), and 148–151 (NKVD). H598 is modified (diphthamide).

This sequence belongs to the TRAFAC class translation factor GTPase superfamily. Classic translation factor GTPase family. EF-G/EF-2 subfamily.

The protein resides in the cytoplasm. Its function is as follows. Catalyzes the GTP-dependent ribosomal translocation step during translation elongation. During this step, the ribosome changes from the pre-translocational (PRE) to the post-translocational (POST) state as the newly formed A-site-bound peptidyl-tRNA and P-site-bound deacylated tRNA move to the P and E sites, respectively. Catalyzes the coordinated movement of the two tRNA molecules, the mRNA and conformational changes in the ribosome. The chain is Elongation factor 2 from Methanobrevibacter ruminantium (strain ATCC 35063 / DSM 1093 / JCM 13430 / OCM 146 / M1) (Methanobacterium ruminantium).